Reading from the N-terminus, the 707-residue chain is UvrABC system protein C (707 aa).

The region spanning 14–94 is the GIY-YIG domain; it reads AEPGCYLMKD…IKKHRPRFNV (81 aa). In terms of domain architecture, UVR spans 206–241; that stretch reads GELVERLRGRMAGAAEGLRFEEAARLRDQLQAVERS. Residues 654-684 form a disordered region; it reads PDAPPAAADEPSGAPEGTPAGGPAEAIPDAA. Positions 658–684 are enriched in low complexity; the sequence is PAAADEPSGAPEGTPAGGPAEAIPDAA.

Belongs to the UvrC family. In terms of assembly, interacts with UvrB in an incision complex.

The protein resides in the cytoplasm. In terms of biological role, the UvrABC repair system catalyzes the recognition and processing of DNA lesions. UvrC both incises the 5' and 3' sides of the lesion. The N-terminal half is responsible for the 3' incision and the C-terminal half is responsible for the 5' incision. The polypeptide is UvrABC system protein C (Anaeromyxobacter dehalogenans (strain 2CP-C)).